The sequence spans 223 residues: uncharacterized protein (223 aa).

This is an uncharacterized protein from Treponema pallidum (strain Nichols).